The chain runs to 890 residues: Inter-alpha-trypsin inhibitor heavy chain H3 (890 aa).

An N-terminal signal peptide occupies residues 1–20 (MAFAWWPCLILALLSSLAAS). Residues 21–34 (GFPRSPFRLLGKRS) constitute a propeptide that is removed on maturation. Residues 29 to 158 (LLGKRSLPEG…KVTFELTYEE (130 aa)) form the VIT domain. Asn91 carries an N-linked (GlcNAc...) asparagine glycan. In terms of domain architecture, VWFA spans 284–467 (NVAFVIDISG…LQLQGFYEEV (184 aa)). Asn580 carries an N-linked (GlcNAc...) asparagine glycan. Asp651 is subject to Aspartate 1-(chondroitin 4-sulfate)-ester. The propeptide occupies 652–890 (PHFIIQIPEK…HTDYIVPNLF (239 aa)).

The protein belongs to the ITIH family. As to quaternary structure, I-alpha-I plasma protease inhibitors are assembled from one or two heavy chains (HC) and one light chain, bikunin. Pre-alpha-inhibitor (P-alpha-I) is composed of ITIH3/HC3 and bikunin. Heavy chains are linked to bikunin via chondroitin 4-sulfate esterified to the alpha-carboxyl of the C-terminal aspartate after propeptide cleavage.

It is found in the secreted. May act as a carrier of hyaluronan in serum or as a binding protein between hyaluronan and other matrix protein, including those on cell surfaces in tissues to regulate the localization, synthesis and degradation of hyaluronan which are essential to cells undergoing biological processes. In Homo sapiens (Human), this protein is Inter-alpha-trypsin inhibitor heavy chain H3 (ITIH3).